The sequence spans 212 residues: Large ribosomal subunit protein uL4 (212 aa).

Belongs to the universal ribosomal protein uL4 family. As to quaternary structure, part of the 50S ribosomal subunit.

In terms of biological role, one of the primary rRNA binding proteins, this protein initially binds near the 5'-end of the 23S rRNA. It is important during the early stages of 50S assembly. It makes multiple contacts with different domains of the 23S rRNA in the assembled 50S subunit and ribosome. Its function is as follows. Forms part of the polypeptide exit tunnel. The sequence is that of Large ribosomal subunit protein uL4 from Phenylobacterium zucineum (strain HLK1).